Here is a 571-residue protein sequence, read N- to C-terminus: MDTKKEIKNNNFICQIINKDLNENKNLSFYTRFPPEPNGYLHIGHAKSICLNFELASLYKGRCNLRFDDTNPLKENIKYIESIKHDINWLGYKWHGNVRYASEYFLKLYQYAQELIKKGLAYVDHLTKEQIREYRGTLNTPGKNSPYRNRTIQENIELFEKMKKGDFSEGEACLRAKINMSSSSIIMRDPVLYRIIFIKHHQTQNKWCIYPMYDFAHCLSDSIEGITHSLCTLEFQDNKFLYNWILKNTSVKHYPKQYEFSRLNLEFSILSKRKIKILIDKNIIEGWDDPRIPTLSALRRKGYTPSSIKNFCQKIGVTKQNNLIEFSMLEHCIRKELNQTAIRTMAILDPIKIFLYNLDSNYKEEFIVPNHPNNPEMGTHKIIFTNTIYIDRSDFKEKYDKKYKRLKLGEKIRLRYSYIIHAEKIEKDEYGNISNIICYCDLNTLGRKPKDNKNPAVIHWISEKNTLSAEFKLYDQLFNIKNPEQQENFLLYINSKSLIKKFGFIEKKIGEEIQKKISNNNIEIFFQFERIGYFCIDFIDSKKNQLVFNRTVGLRDTWDSKKIKTKNITNN.

The 'HIGH' region signature appears at proline 35 to histidine 45. Residues glutamate 36–asparagine 38 and histidine 42–serine 48 each bind ATP. Residues aspartate 68 and tyrosine 213 each coordinate L-glutamine. ATP is bound by residues threonine 232, arginine 262–leucine 263, and leucine 270–lysine 272. The 'KMSKS' region signature appears at isoleucine 269–arginine 273.

Belongs to the class-I aminoacyl-tRNA synthetase family. As to quaternary structure, monomer.

It is found in the cytoplasm. It catalyses the reaction tRNA(Gln) + L-glutamine + ATP = L-glutaminyl-tRNA(Gln) + AMP + diphosphate. The chain is Glutamine--tRNA ligase from Buchnera aphidicola subsp. Acyrthosiphon pisum (strain APS) (Acyrthosiphon pisum symbiotic bacterium).